The chain runs to 201 residues: MAHAEEPEDRTASTEPVVRPGSLLVSSTDLVEPAFRRTVIYVIEHNDAGSLGVVINRPSETAVHDVLPQWAPLAARPSALYVGGPVKRDAALCLATLRTGAQADGVAGLRRVHGRVVMVDLDSDPEVIAPLVEGVRIFAGYSGWTYGQLDSELQRDDWIVISALASDVVAPARVDVWAQVLRRQPLPLALLATHPIDVERN.

This sequence belongs to the UPF0301 (AlgH) family.

This Rhodococcus jostii (strain RHA1) protein is UPF0301 protein RHA1_ro03630.